The sequence spans 360 residues: Peptide chain release factor 1 (360 aa).

Q235 carries the post-translational modification N5-methylglutamine. Positions R285–R295 are enriched in basic and acidic residues. Residues R285 to T309 are disordered.

It belongs to the prokaryotic/mitochondrial release factor family. In terms of processing, methylated by PrmC. Methylation increases the termination efficiency of RF1.

The protein resides in the cytoplasm. Peptide chain release factor 1 directs the termination of translation in response to the peptide chain termination codons UAG and UAA. This is Peptide chain release factor 1 (prfA) from Haemophilus influenzae (strain ATCC 51907 / DSM 11121 / KW20 / Rd).